A 152-amino-acid polypeptide reads, in one-letter code: MFP1 attachment factor 1 (152 aa).

Disordered regions lie at residues 1-33 and 107-152; these read MAEIDSAQSQETVTQETQNKPMTTSFSIWPPTQ and DTVK…ETEP. A WPP region spans residues 12-115; sequence TVTQETQNKP…IDTVKSRSAP (104 aa). Residues 134-152 are compositionally biased toward polar residues; sequence EPSSASGLTGEVSSVETEP.

As to quaternary structure, interacts with WAP through its WPP domain. Binds to MFP1 and FPP proteins. Expressed in young tomato leaves, young fruits, and flowers (at protein level).

The protein resides in the nucleus envelope. Its subcellular location is the cytoplasm. It localises to the golgi apparatus. It is found in the nucleus. The protein localises to the nucleus matrix. This is MFP1 attachment factor 1 (MAF1) from Solanum lycopersicum (Tomato).